The chain runs to 305 residues: UDP-3-O-acyl-N-acetylglucosamine deacetylase (305 aa).

His78, His237, and Asp241 together coordinate Zn(2+). The active-site Proton donor is His264.

Belongs to the LpxC family. Requires Zn(2+) as cofactor.

It catalyses the reaction a UDP-3-O-[(3R)-3-hydroxyacyl]-N-acetyl-alpha-D-glucosamine + H2O = a UDP-3-O-[(3R)-3-hydroxyacyl]-alpha-D-glucosamine + acetate. Its pathway is glycolipid biosynthesis; lipid IV(A) biosynthesis; lipid IV(A) from (3R)-3-hydroxytetradecanoyl-[acyl-carrier-protein] and UDP-N-acetyl-alpha-D-glucosamine: step 2/6. Its function is as follows. Catalyzes the hydrolysis of UDP-3-O-myristoyl-N-acetylglucosamine to form UDP-3-O-myristoylglucosamine and acetate, the committed step in lipid A biosynthesis. The polypeptide is UDP-3-O-acyl-N-acetylglucosamine deacetylase (Cupriavidus metallidurans (strain ATCC 43123 / DSM 2839 / NBRC 102507 / CH34) (Ralstonia metallidurans)).